The sequence spans 331 residues: 6-phosphogluconolactonase (331 aa).

Lys287 is modified (N6-acetyllysine).

It belongs to the cycloisomerase 2 family.

The catalysed reaction is 6-phospho-D-glucono-1,5-lactone + H2O = 6-phospho-D-gluconate + H(+). It functions in the pathway carbohydrate degradation; pentose phosphate pathway; D-ribulose 5-phosphate from D-glucose 6-phosphate (oxidative stage): step 2/3. In terms of biological role, catalyzes the hydrolysis of 6-phosphogluconolactone to 6-phosphogluconate. This Escherichia coli O127:H6 (strain E2348/69 / EPEC) protein is 6-phosphogluconolactonase.